Here is a 258-residue protein sequence, read N- to C-terminus: Imidazole glycerol phosphate synthase subunit HisF (258 aa).

Catalysis depends on residues D11 and D130.

It belongs to the HisA/HisF family. Heterodimer of HisH and HisF.

It is found in the cytoplasm. It catalyses the reaction 5-[(5-phospho-1-deoxy-D-ribulos-1-ylimino)methylamino]-1-(5-phospho-beta-D-ribosyl)imidazole-4-carboxamide + L-glutamine = D-erythro-1-(imidazol-4-yl)glycerol 3-phosphate + 5-amino-1-(5-phospho-beta-D-ribosyl)imidazole-4-carboxamide + L-glutamate + H(+). The protein operates within amino-acid biosynthesis; L-histidine biosynthesis; L-histidine from 5-phospho-alpha-D-ribose 1-diphosphate: step 5/9. Functionally, IGPS catalyzes the conversion of PRFAR and glutamine to IGP, AICAR and glutamate. The HisF subunit catalyzes the cyclization activity that produces IGP and AICAR from PRFAR using the ammonia provided by the HisH subunit. The chain is Imidazole glycerol phosphate synthase subunit HisF from Shigella dysenteriae serotype 1 (strain Sd197).